The sequence spans 345 residues: MTRLPLLLHSPRFAAALTTPPPPPLPPARRLVAAAAGGDLSLAMSAATGEYPVPVSPPYPAASKDVELRRAMTASARSAAYSSAPVVFEDEWLAVVDKPAGVYCDALLSALPCSAATLGDEATKPNLHLANRLDRDTSGLMVITKCNKVAGKLVKAFTEHKVKKTYLALCIGYPPAWEKIKICSGHGRSKHGAWRVYAMSDVGRSLPGGSVVRDMSTRFEVLGINGKGQFREPSNFEVDETESITVQEKAADLTSDGDEKNSIILVRAYPQSGRTHQIRLHCQYLGFPIRGDVKYSGVIEWNGVDYDGHALHAESLSFVHPVTGLPVTFRSPLPSWANEFISTMA.

The active site involves Asp134.

Belongs to the pseudouridine synthase RluA family.

The catalysed reaction is a uridine in RNA = a pseudouridine in RNA. The chain is RNA pseudouridine synthase 1 from Oryza sativa subsp. japonica (Rice).